The following is a 205-amino-acid chain: Nuclear transcription factor Y subunit C-6 (205 aa).

A disordered region spans residues 1–24; sequence MEPKSTTPPPPPPPPVLGAPVPYP.

The protein belongs to the NFYC/HAP5 subunit family. In terms of assembly, heterotrimeric transcription factor composed of three components, NF-YA, NF-YB and NF-YC. NF-YB and NF-YC must interact and dimerize for NF-YA association and DNA binding. Interacts with NFYB2. Interacts with NFYB8, NFYB10 and HD5/NFYB11.

It localises to the nucleus. Its subcellular location is the cytoplasm. Its function is as follows. Component of the NF-Y/HAP transcription factor complex. This chain is Nuclear transcription factor Y subunit C-6, found in Oryza sativa subsp. japonica (Rice).